Here is a 101-residue protein sequence, read N- to C-terminus: UPF0473 protein STER_1939 (101 aa).

Belongs to the UPF0473 family.

This Streptococcus thermophilus (strain ATCC BAA-491 / LMD-9) protein is UPF0473 protein STER_1939.